Reading from the N-terminus, the 543-residue chain is Protein P78/83 (543 aa).

3 disordered regions span residues 147–222 (QALP…QPAA), 235–325 (RNEK…SLSN), and 373–400 (MAKS…ANTP). Positions 182-221 (AAPPPPPSPVPNIPAPPPPPPPSMSELPPAPPMPTEPQPA) are enriched in pro residues. The 21-residue stretch at 226-246 (DRQQLLEAIRNEKNRTRLRPV) folds into the WH2 domain. A compositionally biased stretch (pro residues) spans 271–321 (PKPPSASPPPPPPPPPPPAPPAPPPMVDLSSAPPPPPLVDLPSEMLPPPAP). The segment covering 375 to 384 (KSSSEATSND) has biased composition (polar residues).

Forms a complex with proteins C42 and E27. Interacts with host actin-related protein 2/3 complex. Interacts with protein Ac102.

It localises to the host cytoplasm. Its subcellular location is the host nucleus. Plays a role in the transport of the nucleocapsids from the cytoplasm toward the host nucleus together with the host actin-polymerizing Arp2/3 complex. This Lepidoptera (butterflies and moths) protein is Protein P78/83 (P61).